We begin with the raw amino-acid sequence, 598 residues long: uncharacterized protein (598 aa).

Low complexity predominate over residues 1-19 (MSVPLRFSTPSSSPSASDN). Disordered regions lie at residues 1-54 (MSVP…MRPK), 139-176 (QKNQEARSRANSRVNSRANSRANSSVSLAGMDGSPNWK), and 194-279 (EAQL…ITMP). At 1-313 (MSVPLRFSTP…CKIRHFFREG (313 aa)) the chain is on the cytoplasmic side. Residues 30–48 (ELDTFNTTDVPRRVNTTKA) show a composition bias toward polar residues. The span at 147-165 (RANSRVNSRANSRANSSVS) shows a compositional bias: low complexity. 2 stretches are compositionally biased toward polar residues: residues 218-242 (FSLQSSRQPSIAEEQPQTQRKSSAI) and 255-276 (PRNNVSFSRKPSIAEQDSSQDI). The chain crosses the membrane as a helical span at residues 314–334 (FAEFLGTLVLVVFGVGSNLQA). The Extracellular segment spans residues 335 to 346 (TVTNGAGGSFES). A helical membrane pass occupies residues 347–367 (LSFAWGFGCMLGVYIAGGISG). At 368–388 (GHVNPAVTISLAIFRKFPWYK) the chain is on the cytoplasmic side. The NPA 1 signature appears at 371–373 (NPA). A helical membrane pass occupies residues 389–409 (VPIYIFFQIWGAFFGGALAYG). Residues 410–444 (YHWSSITEFEGGKDIRTPATGGCLYTNPKPYVTWR) lie on the Extracellular side of the membrane. The chain crosses the membrane as a helical span at residues 445–465 (NAFFDEFIGTAVLVGCLFAIL). At 466–473 (DDTNSPPT) the chain is on the cytoplasmic side. A helical membrane pass occupies residues 474-494 (QGMTAFIVGLLIAAIGMALGY). Residues 495-532 (QTSFTLNPARDLGPRMFAWWIGYGPHSFHLYHWWWTWG) lie on the Extracellular side of the membrane. Residues 501 to 503 (NPA) carry the NPA 2 motif. The chain crosses the membrane as a helical span at residues 533-553 (AWGGTIGGGIAGGLIYDLVIF). Topologically, residues 554-598 (TGPESPLNYPDNGFIDKKVHQITAKFEKEEEVENLEKTDSPIENN) are cytoplasmic.

The protein belongs to the MIP/aquaporin (TC 1.A.8) family.

It localises to the membrane. This is an uncharacterized protein from Schizosaccharomyces pombe (strain 972 / ATCC 24843) (Fission yeast).